Consider the following 379-residue polypeptide: MSELSFDAPVWRHGKALRKGYTTGSCATAAAKVAALMVLRQHLIHQVSIVTPSGVTLCLNVESPHIEGQQAIAAIRKDGGDDVDATHGMLIFARVTLNDSGEITLTGGEGIGTVTRKGVGLPLGSAAINRTPRHTIESAVREAIGPARGADVEIFAPEGEARAQKTYNSRLGILGGISIIGTTGIVTPMSEESWKRSLSLELEIKRASGLTRVILVPGNHGERFVREQMGVDTQAVVTMSNFVGYMIEEAVRLGFCQIVLVGHPGKLIKIAAGIFHTHSHIADARMETLVAHLALLGAPLELLTLVSDCDTTEAAMEHIEAYGFGHIYNHLARRICLRVMQMLRFTKTPPVCDAILFSFDNHILGSNRPVDEIAKELQC.

It belongs to the CbiD family.

It carries out the reaction Co-precorrin-5B + S-adenosyl-L-methionine = Co-precorrin-6A + S-adenosyl-L-homocysteine. The protein operates within cofactor biosynthesis; adenosylcobalamin biosynthesis; cob(II)yrinate a,c-diamide from sirohydrochlorin (anaerobic route): step 6/10. Functionally, catalyzes the methylation of C-1 in cobalt-precorrin-5B to form cobalt-precorrin-6A. This is Cobalt-precorrin-5B C(1)-methyltransferase from Salmonella paratyphi B (strain ATCC BAA-1250 / SPB7).